An 803-amino-acid polypeptide reads, in one-letter code: Ras GTPase-activating protein 4B (803 aa).

2 C2 domains span residues 1–105 (MAKR…SGWA) and 116–232 (VQGE…EGWF). Residues Asp-21, Asp-27, Asp-74, Asp-76, Ser-79, Asp-82, Asp-149, Asp-155, Asp-202, Asp-204, Ser-207, and Asp-210 each coordinate Ca(2+). Positions 318–546 (GLAKDFLDLL…AQLKDFITKL (229 aa)) constitute a Ras-GAP domain. Positions 566 to 673 (PPVKEGPLFI…WLSALRKVSI (108 aa)) constitute a PH domain. The Btk-type zinc finger occupies 675–711 (NTGLLGSYHPGVFRGDKWSCCHQKEKTGQGCDKTRSR). Residues His-683, Cys-694, Cys-695, and Cys-705 each contribute to the Zn(2+) site. Residues 781–803 (EAHSSSPAGSPPSEPNCLLELQT) are disordered.

Ca(2+) serves as cofactor.

It is found in the cytoplasm. It localises to the cytosol. The protein resides in the cell membrane. Ca(2+)-dependent Ras GTPase-activating protein, that may play a role in the Ras-MAPK pathway. The polypeptide is Ras GTPase-activating protein 4B (RASA4B) (Homo sapiens (Human)).